The sequence spans 1023 residues: StAR-related lipid transfer protein 8 (1023 aa).

Disordered stretches follow at residues 46–67 (PMGSSDLLAPPSPGLPATSSCE) and 82–161 (TVSL…KVSK). Residues 99-114 (PSSSDRPLLSPTQGQE) show a composition bias toward polar residues. Ser108 carries the phosphoserine modification. Residues 120–130 (AKKRHRNRSFL) are compositionally biased toward basic residues. Over residues 143–161 (GSQQAEPKHSPATSEKVSK) the composition is skewed to polar residues. Arg169 bears the Asymmetric dimethylarginine mark. Phosphoserine occurs at positions 235 and 238. Over residues 387 to 397 (PAQAPAEAEPV) the composition is skewed to low complexity. Disordered stretches follow at residues 387–461 (PAQA…MNEA) and 467–486 (LAGLQASMPRERRDSGVGAS). Over residues 441–459 (ISDTVASSSELDSSGNSMN) the composition is skewed to polar residues. Ser498 and Ser506 each carry phosphoserine. The region spanning 573 to 777 (PPLIHVQRTG…HMISDCKKLF (205 aa)) is the Rho-GAP domain. Positions 733–757 (KKDSPSPRIKSKRSLIGRPGPRDLS) are disordered. Positions 809–1017 (AQAAGVSLSL…RDSFPTLQAA (209 aa)) constitute an START domain.

Binds both the SH2 and PTB domains of TNS1. As to expression, widely expressed with highest levels in kidney, lung and placenta.

The protein resides in the cell junction. Its subcellular location is the focal adhesion. Functionally, accelerates GTPase activity of RHOA and CDC42, but not RAC1. Stimulates the hydrolysis of phosphatidylinositol 4,5-bisphosphate by PLCD1. In Homo sapiens (Human), this protein is StAR-related lipid transfer protein 8 (STARD8).